Reading from the N-terminus, the 792-residue chain is X-ray radiation resistance-associated protein 1 (792 aa).

LRR repeat units lie at residues 104–125, 141–155, 164–184, 188–209, 229–250, and 254–275; these read DLCT…IYIN, ALKE…IKTI, LLEF…CDLG, HLRV…LAVA, ALET…ASLA, and RLKK…QQVQ. Disordered regions lie at residues 490–517, 537–562, and 577–601; these read AEDL…SPSC, TLSH…KSTE, and IHKD…EVKG. Residues 549 to 560 show a composition bias toward basic and acidic residues; sequence SPERPSDEDSKS. Positions 723-745 form a coiled coil; sequence HKQYLEAKRLLKEFQARYRQLVS.

In terms of tissue distribution, expressed predominantly in testis followed by prostate and ovary. Low levels found in other tissues including peripheral blood leukocytes, spleen, thymus, small intestine and colon. Also expressed in neuroblastoma, glioma, breast, lung, leukemia, renal, ovarian, prostate and colorectal cancer cell lines.

The protein resides in the cytoplasm. Its subcellular location is the nucleus. Its function is as follows. May be involved in the response of cells to X-ray radiation. The polypeptide is X-ray radiation resistance-associated protein 1 (Homo sapiens (Human)).